Reading from the N-terminus, the 187-residue chain is Nuclear transcription factor Y subunit C-8 (187 aa).

The interval 163-187 (WPGAWTSVSGEEEEARGKKGGDDGN) is disordered. The span at 177-187 (ARGKKGGDDGN) shows a compositional bias: basic and acidic residues.

The protein belongs to the NFYC/HAP5 subunit family. In terms of assembly, heterotrimeric transcription factor composed of three components, NF-YA, NF-YB and NF-YC. NF-YB and NF-YC must interact and dimerize for NF-YA association and DNA binding. Expressed in flowers and siliques.

The protein resides in the nucleus. Stimulates the transcription of various genes by recognizing and binding to a CCAAT motif in promoters. The protein is Nuclear transcription factor Y subunit C-8 (NFYC8) of Arabidopsis thaliana (Mouse-ear cress).